Reading from the N-terminus, the 424-residue chain is Dihydroorotase (424 aa).

Zn(2+) is bound by residues His58 and His60. Substrate contacts are provided by residues His60–Arg62, Asn92, and Asn276. Residue Asp303 participates in Zn(2+) binding. Asp303 is a catalytic residue. Substrate-binding positions include His307 and Phe321–Gly322.

The protein belongs to the metallo-dependent hydrolases superfamily. DHOase family. Class I DHOase subfamily. The cofactor is Zn(2+).

The catalysed reaction is (S)-dihydroorotate + H2O = N-carbamoyl-L-aspartate + H(+). Its pathway is pyrimidine metabolism; UMP biosynthesis via de novo pathway; (S)-dihydroorotate from bicarbonate: step 3/3. In terms of biological role, catalyzes the reversible cyclization of carbamoyl aspartate to dihydroorotate. The protein is Dihydroorotase of Staphylococcus aureus (strain COL).